The primary structure comprises 293 residues: Small ribosomal subunit biogenesis GTPase RsgA (293 aa).

A CP-type G domain is found at 63–223 (KNELVRPPIA…VADTPGFSSL (161 aa)). GTP contacts are provided by residues 112–115 (SKMD) and 166–174 (GQSGVGKSS). The Zn(2+) site is built by Cys247, Cys252, His254, and Cys260.

This sequence belongs to the TRAFAC class YlqF/YawG GTPase family. RsgA subfamily. As to quaternary structure, monomer. Associates with 30S ribosomal subunit, binds 16S rRNA. The cofactor is Zn(2+).

The protein resides in the cytoplasm. In terms of biological role, one of several proteins that assist in the late maturation steps of the functional core of the 30S ribosomal subunit. Helps release RbfA from mature subunits. May play a role in the assembly of ribosomal proteins into the subunit. Circularly permuted GTPase that catalyzes slow GTP hydrolysis, GTPase activity is stimulated by the 30S ribosomal subunit. This chain is Small ribosomal subunit biogenesis GTPase RsgA, found in Bacillus cereus (strain ATCC 10987 / NRS 248).